Reading from the N-terminus, the 1678-residue chain is Clathrin heavy chain (1678 aa).

WD40-like repeat regions lie at residues 24–67 (SFSF…RPIS), 68–107 (ADSA…MNED), 108–149 (VVFW…SSLN), 150–195 (GCQI…QAIE), 196–257 (GHAA…PEAQ), 258–301 (NDFP…ISAD), and 302–330 (TIFV…VTVD). CHCR repeat units follow at residues 538 to 684 (VAEE…QICV), 687 to 829 (ATKY…SEDI), 834 to 973 (ILVV…QLID), 980 to 1125 (LSET…VKEA), 1129 to 1270 (YIKA…FRLA), 1275 to 1421 (LHIV…LLLN), and 1424 to 1567 (LLVL…YDCF). Residues 1334–1643 (REHLELFWSR…IQMEPQLMIT (310 aa)) form an involved in binding clathrin light chain region. The trimerization stretch occupies residues 1552-1677 (EELLGWFLER…AGGRNMGYPY (126 aa)).

It belongs to the clathrin heavy chain family. In terms of assembly, clathrin triskelions, composed of 3 heavy chains and 3 light chains, are the basic subunits of the clathrin coat. Interacts with sau.

The protein resides in the cytoplasmic vesicle membrane. Its subcellular location is the membrane. It is found in the coated pit. In terms of biological role, clathrin is the major protein of the polyhedral coat of coated pits and vesicles. This chain is Clathrin heavy chain (Chc), found in Drosophila melanogaster (Fruit fly).